The chain runs to 79 residues: Putative defensin-like protein 274 (79 aa).

Positions 1–23 (MASSRFQLVALLVVFSLVISITA) are cleaved as a signal peptide. 4 disulfide bridges follow: cysteine 35/cysteine 76, cysteine 41/cysteine 64, cysteine 47/cysteine 74, and cysteine 51/cysteine 75.

The protein belongs to the DEFL family.

It localises to the secreted. The polypeptide is Putative defensin-like protein 274 (Arabidopsis thaliana (Mouse-ear cress)).